A 166-amino-acid chain; its full sequence is Seed allergenic protein RAG2 (166 aa).

An N-terminal signal peptide occupies residues 1–26; sequence MASNKVVFSALLLIIVSVLAATATMA. Cystine bridges form between C41–C93, C55–C81, C63–C125, C82–C141, and C95–C153. A glycan (N-linked (GlcNAc...) asparagine) is linked at N147.

It belongs to the cereal trypsin/alpha-amylase inhibitor family. In terms of processing, five disulfide bonds are present.

It is found in the secreted. In terms of biological role, seed storage protein. This chain is Seed allergenic protein RAG2 (RAG2), found in Oryza sativa subsp. japonica (Rice).